We begin with the raw amino-acid sequence, 350 residues long: Hydroxymethylglutaryl-CoA synthase (350 aa).

Glu83 functions as the Proton donor/acceptor in the catalytic mechanism. Cys115 (acyl-thioester intermediate) is an active-site residue. (3S)-3-hydroxy-3-methylglutaryl-CoA is bound by residues Cys115 and Thr156. Arg204 is a CoA binding site. The (3S)-3-hydroxy-3-methylglutaryl-CoA site is built by Thr206 and His239. The Proton donor/acceptor role is filled by His239. Position 244 (Lys244) interacts with CoA. (3S)-3-hydroxy-3-methylglutaryl-CoA is bound by residues Asn271 and Ser301.

This sequence belongs to the thiolase-like superfamily. Archaeal HMG-CoA synthase family. Interacts with acetoacetyl-CoA thiolase that catalyzes the precedent step in the pathway and with a DUF35 protein. The acetoacetyl-CoA thiolase/HMG-CoA synthase complex channels the intermediate via a fused CoA-binding site, which allows for efficient coupling of the endergonic thiolase reaction with the exergonic HMGCS reaction.

The enzyme catalyses acetoacetyl-CoA + acetyl-CoA + H2O = (3S)-3-hydroxy-3-methylglutaryl-CoA + CoA + H(+). Its pathway is metabolic intermediate biosynthesis; (R)-mevalonate biosynthesis; (R)-mevalonate from acetyl-CoA: step 2/3. Catalyzes the condensation of acetyl-CoA with acetoacetyl-CoA to form 3-hydroxy-3-methylglutaryl-CoA (HMG-CoA). Functions in the mevalonate (MVA) pathway leading to isopentenyl diphosphate (IPP), a key precursor for the biosynthesis of isoprenoid compounds that are building blocks of archaeal membrane lipids. The sequence is that of Hydroxymethylglutaryl-CoA synthase from Pyrococcus furiosus (strain ATCC 43587 / DSM 3638 / JCM 8422 / Vc1).